We begin with the raw amino-acid sequence, 159 residues long: Ribosomal RNA large subunit methyltransferase H (159 aa).

S-adenosyl-L-methionine is bound by residues leucine 76, glycine 108, and 127–132 (FSKMTL).

Belongs to the RNA methyltransferase RlmH family. As to quaternary structure, homodimer.

Its subcellular location is the cytoplasm. The enzyme catalyses pseudouridine(1915) in 23S rRNA + S-adenosyl-L-methionine = N(3)-methylpseudouridine(1915) in 23S rRNA + S-adenosyl-L-homocysteine + H(+). Specifically methylates the pseudouridine at position 1915 (m3Psi1915) in 23S rRNA. This is Ribosomal RNA large subunit methyltransferase H from Bacillus cereus (strain ATCC 14579 / DSM 31 / CCUG 7414 / JCM 2152 / NBRC 15305 / NCIMB 9373 / NCTC 2599 / NRRL B-3711).